We begin with the raw amino-acid sequence, 1685 residues long: PHD and RING finger domain-containing protein 1 (1685 aa).

The segment at 1 to 82 (MDDDNLDELV…GSEDSEDGIE (82 aa)) is disordered. Residues 41-81 (DSEDDTGSEQDDDTDGEETEGLSEEEDPEDRSGSEDSEDGI) are compositionally biased toward acidic residues. The RING-type; degenerate zinc finger occupies 109–150 (CPICLNAFRDQAVGTPETCAHYFCLDCIIEWSRNANSCPVDR). A PHD-type zinc finger spans residues 188-238 (PTFCEVCGRSDREDRLLLCDGCDAGYHMECLDPPLQEVPVDEWFCPECAVP). 5 disordered regions span residues 333-390 (PLTP…KLKN), 449-483 (DSNG…VARP), 537-590 (SAKR…GLSC), 606-777 (TPVR…GSSF), and 809-860 (KVQR…LLPS). Residue T335 is modified to Phosphothreonine. 2 stretches are compositionally biased toward basic residues: residues 339 to 364 (PAKR…RSSV) and 372 to 387 (RAKK…KGRK). Phosphoserine is present on residues S450 and S460. 2 stretches are compositionally biased toward polar residues: residues 606–625 (TPVR…GNLS) and 637–662 (SPRL…NFPS). A compositionally biased stretch (basic and acidic residues) spans 671–682 (QKTDPRRPDFSK). Composition is skewed to polar residues over residues 694-709 (SNST…QTVE) and 737-751 (SSRG…TSGS). Residues S817, S848, S849, S867, S870, S922, S948, S984, and S1002 each carry the phosphoserine modification. Residues 835-860 (PFDPTGSDSSPPSSSPESLGSGLLPS) show a composition bias toward low complexity. 3 disordered regions span residues 892-1229 (GTEM…VSEV), 1290-1355 (QLDD…APSD), and 1369-1390 (TTLS…SGRG). Acidic residues predominate over residues 922-934 (SDLEQEGLGEIEP). Residues 1001–1010 (SSRSRSTSSS) show a composition bias toward low complexity. Basic residues-rich tracts occupy residues 1011–1031 (RSRK…RTRS) and 1054–1064 (KRHRAKTKSRR). Residues 1065–1075 (SSSDRASSQDR) show a composition bias toward basic and acidic residues. 2 stretches are compositionally biased toward basic residues: residues 1089 to 1102 (GPWG…KSRS) and 1117 to 1129 (SRRR…GSRS). Basic and acidic residues-rich tracts occupy residues 1130 to 1143 (RGRD…LERD) and 1151 to 1165 (RSRE…MTRS). Phosphoserine occurs at positions 1135 and 1139. Over residues 1181–1191 (RTRRPHSREKH) the composition is skewed to basic residues. The span at 1192–1201 (PHSPEKKGAV) shows a compositional bias: basic and acidic residues. S1205 is subject to Phosphoserine. The span at 1292 to 1305 (DDMSSPPSPESTDS) shows a compositional bias: low complexity. S1372 and S1383 each carry phosphoserine. The residue at position 1416 (T1416) is a Phosphothreonine. 3 disordered regions span residues 1421 to 1448 (EAEA…EGDW), 1466 to 1501 (LPPP…VGTL), and 1569 to 1591 (LAVP…AEKT). Positions 1577–1591 (SEERTATPKTAAEKT) are enriched in basic and acidic residues. Residues 1589–1615 (EKTKKEEYMKKLHMQERAVEEVKLAIK) are a coiled coil.

In terms of assembly, interacts with POLR2A (via the C-terminal domain).

The sequence is that of PHD and RING finger domain-containing protein 1 from Rattus norvegicus (Rat).